The following is a 360-amino-acid chain: Membrane-bound lytic murein transglycosylase C (360 aa).

A signal peptide spans 1 to 16 (MKKLLALAVIAPLLIS). C17 carries N-palmitoyl cysteine lipidation. A lipid anchor (S-diacylglycerol cysteine) is attached at C17.

Belongs to the transglycosylase Slt family.

It is found in the cell outer membrane. The enzyme catalyses Exolytic cleavage of the (1-&gt;4)-beta-glycosidic linkage between N-acetylmuramic acid (MurNAc) and N-acetylglucosamine (GlcNAc) residues in peptidoglycan, from either the reducing or the non-reducing ends of the peptidoglycan chains, with concomitant formation of a 1,6-anhydrobond in the MurNAc residue.. Murein-degrading enzyme. May play a role in recycling of muropeptides during cell elongation and/or cell division. The chain is Membrane-bound lytic murein transglycosylase C from Salmonella paratyphi A (strain ATCC 9150 / SARB42).